Here is a 77-residue protein sequence, read N- to C-terminus: DNA-directed RNA polymerase subunit Rpo10 (77 aa).

Zn(2+)-binding residues include Cys7, Cys10, Cys44, and Cys45.

Belongs to the archaeal Rpo10/eukaryotic RPB10 RNA polymerase subunit family. Part of the RNA polymerase complex. Zn(2+) serves as cofactor.

It localises to the cytoplasm. The enzyme catalyses RNA(n) + a ribonucleoside 5'-triphosphate = RNA(n+1) + diphosphate. In terms of biological role, DNA-dependent RNA polymerase (RNAP) catalyzes the transcription of DNA into RNA using the four ribonucleoside triphosphates as substrates. The chain is DNA-directed RNA polymerase subunit Rpo10 from Aeropyrum pernix (strain ATCC 700893 / DSM 11879 / JCM 9820 / NBRC 100138 / K1).